Here is a 137-residue protein sequence, read N- to C-terminus: MSENQDLQQGFLETVKFDEKGLVPAIVQDHETGKVLMMAWMNRESLEMTLERKQACYWSRSRQKLWLKGESSGNMQDVHDILIDCDGDTILLKVSQKGGACHVGYHSCFYRKAKDDLSMEICDTLMFDPEEVYGKKS.

Asp-84 lines the Mg(2+) pocket. Residue Cys-85 coordinates Zn(2+). Asp-86 and Asp-88 together coordinate Mg(2+). Residues Cys-101 and Cys-108 each contribute to the Zn(2+) site.

The protein belongs to the PRA-CH family. Homodimer. Mg(2+) is required as a cofactor. Zn(2+) serves as cofactor.

Its subcellular location is the cytoplasm. The catalysed reaction is 1-(5-phospho-beta-D-ribosyl)-5'-AMP + H2O = 1-(5-phospho-beta-D-ribosyl)-5-[(5-phospho-beta-D-ribosylamino)methylideneamino]imidazole-4-carboxamide. The protein operates within amino-acid biosynthesis; L-histidine biosynthesis; L-histidine from 5-phospho-alpha-D-ribose 1-diphosphate: step 3/9. Functionally, catalyzes the hydrolysis of the adenine ring of phosphoribosyl-AMP. This Chlorobium limicola (strain DSM 245 / NBRC 103803 / 6330) protein is Phosphoribosyl-AMP cyclohydrolase.